Here is a 527-residue protein sequence, read N- to C-terminus: Bacillolysin (527 aa).

A signal peptide spans 1-28 (MKKSYLATSLTLSIAVGVSGFTSVPAFA). Positions 29 to 223 (KTKIDYHKQW…VINKYNMLDH (195 aa)) are cleaved as a propeptide — activation peptide. Residues aspartate 276, aspartate 278, and aspartate 354 each coordinate Ca(2+). Histidine 358 contributes to the Zn(2+) binding site. Residue glutamate 359 is part of the active site. Residues histidine 362 and glutamate 382 each contribute to the Zn(2+) site. Ca(2+) contacts are provided by aspartate 393, asparagine 394, aspartate 396, glutamate 401, tyrosine 404, threonine 405, and aspartate 411. The active-site Proton donor is histidine 442.

It belongs to the peptidase M4 family. Requires Ca(2+) as cofactor. Zn(2+) serves as cofactor.

It is found in the secreted. It catalyses the reaction Similar, but not identical, to that of thermolysin.. Functionally, extracellular zinc metalloprotease. The polypeptide is Bacillolysin (npr) (Brevibacillus brevis (Bacillus brevis)).